Consider the following 106-residue polypeptide: Thiosulfate sulfurtransferase GlpE (106 aa).

The 89-residue stretch at 17–105 (EQSEAKLVDI…WQRAELPIVR (89 aa)) folds into the Rhodanese domain. Cys65 serves as the catalytic Cysteine persulfide intermediate.

This sequence belongs to the GlpE family.

Its subcellular location is the cytoplasm. It catalyses the reaction thiosulfate + hydrogen cyanide = thiocyanate + sulfite + 2 H(+). It carries out the reaction thiosulfate + [thioredoxin]-dithiol = [thioredoxin]-disulfide + hydrogen sulfide + sulfite + 2 H(+). Functionally, transferase that catalyzes the transfer of sulfur from thiosulfate to thiophilic acceptors such as cyanide or dithiols. May function in a CysM-independent thiosulfate assimilation pathway by catalyzing the conversion of thiosulfate to sulfite, which can then be used for L-cysteine biosynthesis. The sequence is that of Thiosulfate sulfurtransferase GlpE from Vibrio campbellii (strain ATCC BAA-1116).